Consider the following 217-residue polypeptide: Probable transaldolase (217 aa).

The active-site Schiff-base intermediate with substrate is K83.

Belongs to the transaldolase family. Type 3B subfamily.

The protein localises to the cytoplasm. The enzyme catalyses D-sedoheptulose 7-phosphate + D-glyceraldehyde 3-phosphate = D-erythrose 4-phosphate + beta-D-fructose 6-phosphate. The protein operates within carbohydrate degradation; pentose phosphate pathway; D-glyceraldehyde 3-phosphate and beta-D-fructose 6-phosphate from D-ribose 5-phosphate and D-xylulose 5-phosphate (non-oxidative stage): step 2/3. In terms of biological role, transaldolase is important for the balance of metabolites in the pentose-phosphate pathway. This Chelativorans sp. (strain BNC1) protein is Probable transaldolase.